A 585-amino-acid polypeptide reads, in one-letter code: Glutamate decarboxylase 2 (585 aa).

The segment at 1 to 25 (MASPGSGFWSFGSEDGSGDPENPST) is disordered. Phosphoserine occurs at positions 3, 6, 10, and 13. Residues Cys-30 and Cys-45 are each lipidated (S-palmitoyl cysteine). 181 to 183 (QLS) is a binding site for substrate. The residue at position 396 (Lys-396) is an N6-(pyridoxal phosphate)lysine. Arg-558 serves as a coordination point for substrate.

This sequence belongs to the group II decarboxylase family. As to quaternary structure, homodimer. Pyridoxal 5'-phosphate serves as cofactor. In terms of processing, phosphorylated; which does not affect kinetic parameters or subcellular location. Palmitoylated; which is required for presynaptic clustering.

The protein localises to the cytoplasm. Its subcellular location is the cytosol. The protein resides in the cytoplasmic vesicle. It is found in the presynaptic cell membrane. It localises to the golgi apparatus membrane. It catalyses the reaction L-glutamate + H(+) = 4-aminobutanoate + CO2. Functionally, catalyzes the production of GABA. The sequence is that of Glutamate decarboxylase 2 (GAD2) from Canis lupus familiaris (Dog).